A 91-amino-acid chain; its full sequence is Cell division topological specificity factor (91 aa).

The protein belongs to the MinE family.

Its function is as follows. Prevents the cell division inhibition by proteins MinC and MinD at internal division sites while permitting inhibition at polar sites. This ensures cell division at the proper site by restricting the formation of a division septum at the midpoint of the long axis of the cell. The polypeptide is Cell division topological specificity factor (Erwinia tasmaniensis (strain DSM 17950 / CFBP 7177 / CIP 109463 / NCPPB 4357 / Et1/99)).